The primary structure comprises 303 residues: Mycothiol acetyltransferase (303 aa).

N-acetyltransferase domains are found at residues 4 to 141 (ITVR…RSLA) and 154 to 303 (IVLR…ANGA). Glu38 contacts 1D-myo-inositol 2-(L-cysteinylamino)-2-deoxy-alpha-D-glucopyranoside. An acetyl-CoA-binding site is contributed by 80 to 82 (AAV). Residues Glu181, Lys223, and Glu234 each coordinate 1D-myo-inositol 2-(L-cysteinylamino)-2-deoxy-alpha-D-glucopyranoside. Acetyl-CoA is bound by residues 238 to 240 (VGI) and 245 to 251 (QGRGLGR). Tyr272 is a 1D-myo-inositol 2-(L-cysteinylamino)-2-deoxy-alpha-D-glucopyranoside binding site. An acetyl-CoA-binding site is contributed by 277–282 (NTAAVN).

This sequence belongs to the acetyltransferase family. MshD subfamily. Monomer.

The enzyme catalyses 1D-myo-inositol 2-(L-cysteinylamino)-2-deoxy-alpha-D-glucopyranoside + acetyl-CoA = mycothiol + CoA + H(+). In terms of biological role, catalyzes the transfer of acetyl from acetyl-CoA to desacetylmycothiol (Cys-GlcN-Ins) to form mycothiol. The protein is Mycothiol acetyltransferase of Nocardia farcinica (strain IFM 10152).